A 179-amino-acid chain; its full sequence is Methylated-DNA--protein-cysteine methyltransferase, inducible (179 aa).

C141 (nucleophile; methyl group acceptor) is an active-site residue.

The protein belongs to the MGMT family.

The enzyme catalyses a 6-O-methyl-2'-deoxyguanosine in DNA + L-cysteinyl-[protein] = S-methyl-L-cysteinyl-[protein] + a 2'-deoxyguanosine in DNA. It carries out the reaction a 4-O-methyl-thymidine in DNA + L-cysteinyl-[protein] = a thymidine in DNA + S-methyl-L-cysteinyl-[protein]. In terms of biological role, involved in the cellular defense against the biological effects of O6-methylguanine (O6-MeG) and O4-methylthymine (O4-MeT) in DNA. Repairs the methylated nucleobase in DNA by stoichiometrically transferring the methyl group to a cysteine residue in the enzyme. This is a suicide reaction: the enzyme is irreversibly inactivated. The protein is Methylated-DNA--protein-cysteine methyltransferase, inducible (adaB) of Bacillus subtilis (strain 168).